The following is a 454-amino-acid chain: G-protein coupled receptor 39 (454 aa).

Topologically, residues 1–34 are extracellular; that stretch reads MASPSHPSRDCSQVIDHSHVPEFEVATWIKITLI. 2 disulfide bridges follow: Cys-11-Cys-191 and Cys-108-Cys-210. Zn(2+) contacts are provided by His-17 and His-19. A helical membrane pass occupies residues 35–55; sequence LVYLVIFVVGILGNSVTIRVT. The Cytoplasmic segment spans residues 56 to 69; that stretch reads QVLQKKGYLQKEVT. The chain crosses the membrane as a helical span at residues 70–89; sequence DHMVSLACSDILVFLIGMPM. The Extracellular segment spans residues 90–109; it reads EFYSIIWNPLTTPSYTVSCK. The helical transmembrane segment at 110–131 threads the bilayer; it reads VHTFLFEACSYATLLHVLTLSF. The Cytoplasmic portion of the chain corresponds to 132 to 151; sequence ERYIAICHPFRYKAMSGPCQ. Residues 152-172 traverse the membrane as a helical segment; the sequence is VKLLIGFVWVTSALVALPLLF. At 173–217 the chain is on the extracellular side; the sequence is AMGVEYPLVNVPSHRGLICNRSRTRHQEQPESSNMSICTNLSSRW. Asn-192, Asn-206, and Asn-212 each carry an N-linked (GlcNAc...) asparagine glycan. A helical transmembrane segment spans residues 218 to 242; that stretch reads TVFQSSIFSAFVVYLVVLVSVAFMC. The Cytoplasmic portion of the chain corresponds to 243–283; it reads WSMMQVLRRSKQGTLAAQGQQLQLRKLESQESRSARRQTII. A helical transmembrane segment spans residues 284-305; sequence FLELIVVTLAVCWMPNQVRRIM. Over 306 to 323 the chain is Extracellular; it reads AAAKPKHDWTKSYFRAYM. A helical membrane pass occupies residues 324–344; the sequence is ILLPFSDTFFYLSSVVNPLLY. Over 345–454 the chain is Cytoplasmic; it reads NVSSQQFRSV…TRNGFQEHEV (110 aa). The residue at position 397 (Ser-397) is a Phosphoserine. The segment at 415-454 is disordered; that stretch reads HSEAKPESKPQELSCESPEPNSERKPANPATRNGFQEHEV.

Belongs to the G-protein coupled receptor 1 family. In terms of assembly, interacts with HTR1A. Interacts with GALR1. As to expression, detected in liver, kidney, abomasum, uterus, small intestine and colon.

The protein localises to the cell membrane. In terms of biological role, zinc-sensing receptor that can sense changes in extracellular Zn(2+), mediate Zn(2+) signal transmission, and participates in the regulation of numerous physiological processes including glucose homeostasis regulation, gastrointestinal mobility, hormone secretion and cell death. Activation by Zn(2+) in keratinocytes increases the intracellular concentration of Ca(2+) and activates the ERK/MAPK and PI3K/AKT signaling pathways leading to epithelial repair. Plays an essential role in normal wound healing by inducing the production of cytokines including the major inflammatory cytokine IL6 via the PKC/MAPK/CEBPB pathway. Regulates adipose tissue metabolism, especially lipolysis, and regulates the function of lipases, such as hormone-sensitive lipase and adipose triglyceride lipase. Plays a role in the inhibition of cell death and protects against oxidative, endoplasmic reticulum and mitochondrial stress by inducing secretion of the cytoprotective pigment epithelium-derived growth factor (PEDF) and probably other protective transcripts in a GNA13/RHOA/SRE-dependent manner. Forms dynamic heteroreceptor complexes with HTR1A and GALR1 depending on cell type or specific physiological states, resulting in signaling diversity: HTR1A-GPR39 shows additive increase in signaling along the serum response element (SRE) and NF-kappa-B pathways while GALR1 acts as an antagonist blocking SRE. This chain is G-protein coupled receptor 39 (GPR39), found in Bos taurus (Bovine).